The primary structure comprises 523 residues: Acetyl-CoA hydrolase (523 aa).

Residue 277–281 participates in CoA binding; that stretch reads GIGNI. Catalysis depends on glutamate 302, which acts as the 5-glutamyl coenzyme A thioester intermediate. Residues asparagine 392 and glycine 396 each coordinate CoA.

The protein belongs to the acetyl-CoA hydrolase/transferase family.

The protein localises to the cytoplasm. It catalyses the reaction acetyl-CoA + H2O = acetate + CoA + H(+). Functionally, presumably involved in regulating the intracellular acetyl-CoA pool for fatty acid and cholesterol synthesis and fatty acid oxidation. The chain is Acetyl-CoA hydrolase (ACH1) from Kluyveromyces lactis (strain ATCC 8585 / CBS 2359 / DSM 70799 / NBRC 1267 / NRRL Y-1140 / WM37) (Yeast).